A 63-amino-acid chain; its full sequence is MSRRCEICGKGPWTGLQVSHSHRRTKTRWLPNLHKVRALVNGKVKTIKVCTRCLKAGKVQKVV.

It belongs to the bacterial ribosomal protein bL28 family.

This Dictyoglomus thermophilum (strain ATCC 35947 / DSM 3960 / H-6-12) protein is Large ribosomal subunit protein bL28.